The primary structure comprises 389 residues: METLDGFAREKLDALEAQALRRRLVETDRREGAIAFREGRRLVSFCCNDYLNLSQHPDVKRAAVEATGKYGTGSGASRLVSGNHPLFGELERRLADWKQTEDCVVFGSGYMANMGIIPSLVREGDLIIADELSHACLLSGSKLSGARVAIFRHNDIAHLEELLGAHRGGAKHCLILTDGIFSMDGDAAPVEALAALAAQHDAWLMTDDAHGIGVVGHEGRGSSFMGERKAAVPLQMGTLSKAVGGYGGYLCASAPVVDLIRTRARTLIYSTGLPPAAVAASIAALDFIRGNPDYCKRPVEKARSFTRALGLADPVSPIVPLILGDAEVTLAASALLEAEGYLVTGIRPPTVPEGTARLRFTFTAEHDDADIARLATLVRERIIQRRAAE.

Residue arginine 22 coordinates substrate. A pyridoxal 5'-phosphate-binding site is contributed by 109–110 (GY). Residue histidine 134 participates in substrate binding. Pyridoxal 5'-phosphate contacts are provided by residues serine 182, 207 to 210 (DDAH), and 238 to 241 (TLSK). An N6-(pyridoxal phosphate)lysine modification is found at lysine 241. Threonine 350 is a substrate binding site.

It belongs to the class-II pyridoxal-phosphate-dependent aminotransferase family. BioF subfamily. In terms of assembly, homodimer. Pyridoxal 5'-phosphate serves as cofactor.

The enzyme catalyses 6-carboxyhexanoyl-[ACP] + L-alanine + H(+) = (8S)-8-amino-7-oxononanoate + holo-[ACP] + CO2. Its pathway is cofactor biosynthesis; biotin biosynthesis. Its function is as follows. Catalyzes the decarboxylative condensation of pimeloyl-[acyl-carrier protein] and L-alanine to produce 8-amino-7-oxononanoate (AON), [acyl-carrier protein], and carbon dioxide. This is Putative 8-amino-7-oxononanoate synthase (bioF) from Parvibaculum lavamentivorans (strain DS-1 / DSM 13023 / NCIMB 13966).